The primary structure comprises 288 residues: Eukaryotic translation initiation factor 3 subunit G (288 aa).

Residues 1–35 form a disordered region; the sequence is MSRVANNRDWADDEDLEDSNELPQSTTTTNKDGTQ. Residues 11-20 show a composition bias toward acidic residues; it reads ADDEDLEDSN. The segment covering 21 to 35 has biased composition (polar residues); that stretch reads ELPQSTTTTNKDGTQ. An RRM domain is found at 208-286; that stretch reads ATLRVTNVSE…LILRVEFAKK (79 aa).

This sequence belongs to the eIF-3 subunit G family. As to quaternary structure, component of the eukaryotic translation initiation factor 3 (eIF-3) complex.

It is found in the cytoplasm. RNA-binding component of the eukaryotic translation initiation factor 3 (eIF-3) complex, which is involved in protein synthesis of a specialized repertoire of mRNAs and, together with other initiation factors, stimulates binding of mRNA and methionyl-tRNAi to the 40S ribosome. The eIF-3 complex specifically targets and initiates translation of a subset of mRNAs involved in cell proliferation. This subunit can bind 18S rRNA. This chain is Eukaryotic translation initiation factor 3 subunit G (tif35), found in Botryotinia fuckeliana (strain B05.10) (Noble rot fungus).